Here is a 327-residue protein sequence, read N- to C-terminus: GMP reductase (327 aa).

Residue Cys-176 is the Thioimidate intermediate of the active site. Residue 205-228 (IIADGGIRTHGDIAKSIRFGASMV) coordinates NADP(+).

The protein belongs to the IMPDH/GMPR family. GuaC type 2 subfamily.

The catalysed reaction is IMP + NH4(+) + NADP(+) = GMP + NADPH + 2 H(+). Functionally, catalyzes the irreversible NADPH-dependent deamination of GMP to IMP. It functions in the conversion of nucleobase, nucleoside and nucleotide derivatives of G to A nucleotides, and in maintaining the intracellular balance of A and G nucleotides. This chain is GMP reductase, found in Streptococcus pyogenes serotype M49 (strain NZ131).